The chain runs to 195 residues: Guanylate kinase (195 aa).

The Guanylate kinase-like domain maps to 12 to 191 (GLIILISGPS…TIEDIKQLIL (180 aa)). Position 19–26 (19–26 (GPSGVGKG)) interacts with ATP.

It belongs to the guanylate kinase family.

Its subcellular location is the cytoplasm. The catalysed reaction is GMP + ATP = GDP + ADP. Its function is as follows. Essential for recycling GMP and indirectly, cGMP. In Mycoplasmoides gallisepticum (strain R(low / passage 15 / clone 2)) (Mycoplasma gallisepticum), this protein is Guanylate kinase (gmk).